The primary structure comprises 610 residues: Menin (610 aa).

The interaction with FANCD2 stretch occupies residues 214–390 (GVAERSWLYL…SLLEAGEERP (177 aa)). The interval 460 to 552 (REAEAAEAEE…SPPPEGPVLT (93 aa)) is disordered. Positions 484–500 (RRESKPEEPPPPKKPAL) are enriched in basic and acidic residues. Phosphoserine occurs at positions 487 and 543. T594 is modified (phosphothreonine).

In terms of assembly, component of the MLL-HCF complex, at least composed of KMT2A/MLL1, MEN1, ASH2L, RBBP5, DPY30, WDR5, HCFC1 and HCFC2. Component of the menin-associated histone methyltransferase complex, at least composed of KMT2B/MLL4, MEN1, ASH2L, RBBP5, DPY30 and WDR5. Interacts with POLR2B. Interacts with POLR2A phosphorylated at 'Ser-5', but not with the unphosphorylated, nor 'Ser-2' phosphorylated POLR2A forms. Interacts with FANCD2 and DBF4. Interacts with SMAD3, but not with SMAD2, nor SMAD4. Directly interacts with NFKB1, NFKB2 and RELA. Interacts with JUND (via MBM motif); inhibits the interaction of JUND with MAPK10 and the phosphorylation of JUND by MAP kinases MAPK8 and MAPK10. Interacts with KMT2A (via MBM motif). The KMT2A-MEN1 complex interacts with PSIP1 with a greater affinity as MEN1 enhances interaction of KMT2A with PSIP1. As to expression, widely expressed, including in the pituitary, brain, large intestine, spleen, kidney, adrenal gland, ovary, testis, thymus, lung, epididymis, bone marrow, pancreatic islets and placenta.

It localises to the nucleus. Its function is as follows. Essential component of a MLL/SET1 histone methyltransferase (HMT) complex, a complex that specifically methylates 'Lys-4' of histone H3 (H3K4). Functions as a transcriptional regulator. Binds to the TERT promoter and represses telomerase expression. Represses JUND-mediated transcriptional activation on AP1 sites, as well as that mediated by NFKB subunit RELA. Positively regulates HOXC8 and HOXC6 gene expression. May be involved in normal hematopoiesis through the activation of HOXA9 expression. May be involved in DNA repair. Plays a role in TGFB1-mediated inhibition of cell-proliferation, possibly regulating SMAD3 transcriptional activity. The sequence is that of Menin (Men1) from Rattus norvegicus (Rat).